The primary structure comprises 198 residues: uncharacterized protein (198 aa).

This sequence to A.aeolicus aq_1211 and aq_1583.

This is an uncharacterized protein from Aquifex aeolicus (strain VF5).